A 152-amino-acid polypeptide reads, in one-letter code: Superoxide dismutase [Cu-Zn] 2 (152 aa).

Residues H45, H47, and H62 each contribute to the Cu cation site. Residues C56 and C145 are joined by a disulfide bond. 4 residues coordinate Zn(2+): H62, H70, H79, and D82. Cu cation is bound at residue H119.

It belongs to the Cu-Zn superoxide dismutase family. As to quaternary structure, homodimer. Requires Cu cation as cofactor. Zn(2+) serves as cofactor.

Its subcellular location is the cytoplasm. The enzyme catalyses 2 superoxide + 2 H(+) = H2O2 + O2. Functionally, destroys radicals which are normally produced within the cells and which are toxic to biological systems. In Solanum lycopersicum (Tomato), this protein is Superoxide dismutase [Cu-Zn] 2 (SODCC.5).